Consider the following 330-residue polypeptide: MQTLAQTLSVQAVNASLTQLLLTLADTSKAISGAVRHGALAGVLGATEQENIQGETQKKLDVITNDMLKDALKADGNVRGLASEEEDYVVEVNAKGEYLVCFDPLDGSSNIDINSLVGTIFSVLPAPAGELNEQSFLQAGRKQVAAGYVLYGPSTMMALTTGQGTQFYTLAPDSQEFLLTDDSVQITPDTAEFAINMSNQRFWEAPMQTYIADLLLGEIGPREQSFNMRWIAAMVGDVHRVLCRGGIFSYPTDNKNPAKPFKLRLMYEANPMALLVEQAGGKASTGYETILDIQPTEIHQRVAVILGSANEVDTCLSYHGIDYSEEPSID.

The Mg(2+) site is built by Glu-84, Asp-103, Leu-105, and Asp-106. Residues 106–109 (DGSS), Asn-196, and Lys-262 contribute to the substrate site. Glu-268 is a Mg(2+) binding site.

It belongs to the FBPase class 1 family. In terms of assembly, homotetramer. It depends on Mg(2+) as a cofactor.

It localises to the cytoplasm. It catalyses the reaction beta-D-fructose 1,6-bisphosphate + H2O = beta-D-fructose 6-phosphate + phosphate. Its pathway is carbohydrate biosynthesis; gluconeogenesis. This chain is Fructose-1,6-bisphosphatase class 1, found in Shewanella frigidimarina (strain NCIMB 400).